The sequence spans 493 residues: Cyclin-dependent kinase-like 2 (493 aa).

The Protein kinase domain occupies Y4–F287. Residues V10–V18 and K33 contribute to the ATP site. Residues K45–E51 carry the [NKR]KIAxRE motif. Catalysis depends on D126, which acts as the Proton acceptor. Disordered regions lie at residues V311–V338 and G363–S384. A compositionally biased stretch (basic and acidic residues) spans R320 to T336.

The protein belongs to the protein kinase superfamily. CMGC Ser/Thr protein kinase family. CDC2/CDKX subfamily.

It localises to the cytoplasm. It is found in the nucleus. The catalysed reaction is L-seryl-[protein] + ATP = O-phospho-L-seryl-[protein] + ADP + H(+). It carries out the reaction L-threonyl-[protein] + ATP = O-phospho-L-threonyl-[protein] + ADP + H(+). The sequence is that of Cyclin-dependent kinase-like 2 from Pongo abelii (Sumatran orangutan).